A 477-amino-acid polypeptide reads, in one-letter code: Cysteine--tRNA ligase (477 aa).

Residue Cys29 coordinates Zn(2+). Residues 31–41 (PTVYNYFHVGN) carry the 'HIGH' region motif. Zn(2+) is bound by residues Cys209, His234, and Glu238. Positions 267–271 (KMSKS) match the 'KMSKS' region motif. ATP is bound at residue Lys270.

It belongs to the class-I aminoacyl-tRNA synthetase family. Monomer. Zn(2+) is required as a cofactor.

The protein resides in the cytoplasm. It catalyses the reaction tRNA(Cys) + L-cysteine + ATP = L-cysteinyl-tRNA(Cys) + AMP + diphosphate. This chain is Cysteine--tRNA ligase, found in Desulfitobacterium hafniense (strain DSM 10664 / DCB-2).